The chain runs to 619 residues: Chaperone protein HscA homolog (619 aa).

The protein belongs to the heat shock protein 70 family.

Functionally, chaperone involved in the maturation of iron-sulfur cluster-containing proteins. Has a low intrinsic ATPase activity which is markedly stimulated by HscB. This is Chaperone protein HscA homolog from Pseudomonas paraeruginosa (strain DSM 24068 / PA7) (Pseudomonas aeruginosa (strain PA7)).